A 284-amino-acid chain; its full sequence is Diaminopimelate epimerase (284 aa).

Substrate contacts are provided by N20, Q53, and N73. Catalysis depends on C82, which acts as the Proton donor. Substrate-binding positions include 83-84, N167, N200, and 218-219; these read GN and ER. Residue C227 is the Proton acceptor of the active site. 228–229 is a binding site for substrate; that stretch reads GS.

It belongs to the diaminopimelate epimerase family. As to quaternary structure, homodimer.

It is found in the cytoplasm. The enzyme catalyses (2S,6S)-2,6-diaminopimelate = meso-2,6-diaminopimelate. It participates in amino-acid biosynthesis; L-lysine biosynthesis via DAP pathway; DL-2,6-diaminopimelate from LL-2,6-diaminopimelate: step 1/1. Functionally, catalyzes the stereoinversion of LL-2,6-diaminopimelate (L,L-DAP) to meso-diaminopimelate (meso-DAP), a precursor of L-lysine and an essential component of the bacterial peptidoglycan. The chain is Diaminopimelate epimerase from Xylella fastidiosa (strain 9a5c).